The sequence spans 26 residues: Citropin-2.1.3 (26 aa).

Expressed by the dorsal and submental skin glands.

The protein localises to the secreted. The sequence is that of Citropin-2.1.3 from Ranoidea citropa (Australian Blue Mountains tree frog).